The sequence spans 244 residues: Demethylmenaquinone methyltransferase (244 aa).

Residues Thr-65, Asp-86, and 114–115 (DA) each bind S-adenosyl-L-methionine.

This sequence belongs to the class I-like SAM-binding methyltransferase superfamily. MenG/UbiE family.

The catalysed reaction is a 2-demethylmenaquinol + S-adenosyl-L-methionine = a menaquinol + S-adenosyl-L-homocysteine + H(+). Its pathway is quinol/quinone metabolism; menaquinone biosynthesis; menaquinol from 1,4-dihydroxy-2-naphthoate: step 2/2. Its function is as follows. Methyltransferase required for the conversion of demethylmenaquinol (DMKH2) to menaquinol (MKH2). This chain is Demethylmenaquinone methyltransferase, found in Lactobacillus johnsonii (strain CNCM I-12250 / La1 / NCC 533).